The chain runs to 117 residues: Immunity protein BC_0921 (117 aa).

As to quaternary structure, probably interacts with cognate toxin BC_0920 but not with other non-cognate toxins. The interaction inhibits the toxic activity of BC_0920.

It localises to the cytoplasm. In terms of biological role, immunity component of an LXG toxin-immunity module. Neutralizes the RNase activity of cognate toxin BC_0920. Probably does not have immunity protein activity on other toxins with the LXG domain. The polypeptide is Immunity protein BC_0921 (Bacillus cereus (strain ATCC 14579 / DSM 31 / CCUG 7414 / JCM 2152 / NBRC 15305 / NCIMB 9373 / NCTC 2599 / NRRL B-3711)).